The primary structure comprises 319 residues: 4-diphosphocytidyl-2-C-methyl-D-erythritol kinase (319 aa).

Residue K21 is part of the active site. 106-116 (PIGAGLAGGSS) lines the ATP pocket. D148 is a catalytic residue.

It belongs to the GHMP kinase family. IspE subfamily.

The catalysed reaction is 4-CDP-2-C-methyl-D-erythritol + ATP = 4-CDP-2-C-methyl-D-erythritol 2-phosphate + ADP + H(+). Its pathway is isoprenoid biosynthesis; isopentenyl diphosphate biosynthesis via DXP pathway; isopentenyl diphosphate from 1-deoxy-D-xylulose 5-phosphate: step 3/6. Catalyzes the phosphorylation of the position 2 hydroxy group of 4-diphosphocytidyl-2C-methyl-D-erythritol. The protein is 4-diphosphocytidyl-2-C-methyl-D-erythritol kinase of Prochlorococcus marinus (strain MIT 9303).